A 306-amino-acid polypeptide reads, in one-letter code: Cell division protein ZipA (306 aa).

Residues 1–6 (MENLQL) lie on the Periplasmic side of the membrane. The chain crosses the membrane as a helical span at residues 7–27 (VLLLIGAIAIIAVLVHGFWSI). The Cytoplasmic segment spans residues 28-306 (RKQQPKGYKQ…NYIQRIRAQA (279 aa)).

Belongs to the ZipA family. As to quaternary structure, interacts with FtsZ via their C-terminal domains.

The protein localises to the cell inner membrane. Functionally, essential cell division protein that stabilizes the FtsZ protofilaments by cross-linking them and that serves as a cytoplasmic membrane anchor for the Z ring. Also required for the recruitment to the septal ring of downstream cell division proteins. The sequence is that of Cell division protein ZipA from Shewanella halifaxensis (strain HAW-EB4).